The chain runs to 300 residues: Ribosome-inactivating protein 3 (300 aa).

E207 is a catalytic residue.

The protein belongs to the ribosome-inactivating protein family. Type 1 RIP subfamily. Monomer. As to expression, accumulates to high levels in seeds.

It is found in the cytoplasm. The enzyme catalyses Endohydrolysis of the N-glycosidic bond at one specific adenosine on the 28S rRNA.. Possesses features of some constitutive defense agent. The coordinate Opaque-2-controlled synthesis of this protein and the major seed storage proteins (zeins) may provide the germinating seedling with both nutritional benefits and protection against pathogen invasion of the surrounding endosperm. This Zea mays (Maize) protein is Ribosome-inactivating protein 3 (CRIP3).